The following is a 708-amino-acid chain: Polyribonucleotide nucleotidyltransferase (708 aa).

Asp486 and Asp492 together coordinate Mg(2+). A KH domain is found at Pro553–Ile612. The region spanning Gly622 to Lys690 is the S1 motif domain.

The protein belongs to the polyribonucleotide nucleotidyltransferase family. Mg(2+) is required as a cofactor.

Its subcellular location is the cytoplasm. It catalyses the reaction RNA(n+1) + phosphate = RNA(n) + a ribonucleoside 5'-diphosphate. Functionally, involved in mRNA degradation. Catalyzes the phosphorolysis of single-stranded polyribonucleotides processively in the 3'- to 5'-direction. The sequence is that of Polyribonucleotide nucleotidyltransferase from Nitrosomonas europaea (strain ATCC 19718 / CIP 103999 / KCTC 2705 / NBRC 14298).